Consider the following 596-residue polypeptide: Probable tripeptidyl-peptidase SED2 (596 aa).

The signal sequence occupies residues 1-16 (MRLLKFVCLLASVAAA). Positions 17-203 (KPTPGASHKV…LESMSVEEFA (187 aa)) are cleaved as a propeptide — removed in mature form. Positions 210–596 (LVTTACLREL…NFQALTKVLP (387 aa)) constitute a Peptidase S53 domain. Residue Asn-265 is glycosylated (N-linked (GlcNAc...) asparagine). Residues Glu-286 and Asp-290 each act as charge relay system in the active site. N-linked (GlcNAc...) asparagine glycosylation is present at Asn-403. The active-site Charge relay system is Ser-501. Residues Asp-543 and Ile-544 each contribute to the Ca(2+) site. N-linked (GlcNAc...) asparagine glycosylation is present at Asn-572. Ca(2+) is bound by residues Gly-576 and Asp-578.

The cofactor is Ca(2+).

It localises to the secreted. The protein resides in the extracellular space. It catalyses the reaction Release of an N-terminal tripeptide from a polypeptide.. In terms of biological role, secreted tripeptidyl-peptidase which degrades proteins at acidic pHs and is involved in virulence. In Trichophyton verrucosum (strain HKI 0517), this protein is Probable tripeptidyl-peptidase SED2 (SED2).